The sequence spans 186 residues: ATP synthase subunit b (186 aa).

The chain crosses the membrane as a helical span at residues Ile28–Pro48.

Belongs to the ATPase B chain family. As to quaternary structure, F-type ATPases have 2 components, F(1) - the catalytic core - and F(0) - the membrane proton channel. F(1) has five subunits: alpha(3), beta(3), gamma(1), delta(1), epsilon(1). F(0) has three main subunits: a(1), b(2) and c(10-14). The alpha and beta chains form an alternating ring which encloses part of the gamma chain. F(1) is attached to F(0) by a central stalk formed by the gamma and epsilon chains, while a peripheral stalk is formed by the delta and b chains.

It localises to the cell membrane. Its function is as follows. F(1)F(0) ATP synthase produces ATP from ADP in the presence of a proton or sodium gradient. F-type ATPases consist of two structural domains, F(1) containing the extramembraneous catalytic core and F(0) containing the membrane proton channel, linked together by a central stalk and a peripheral stalk. During catalysis, ATP synthesis in the catalytic domain of F(1) is coupled via a rotary mechanism of the central stalk subunits to proton translocation. Functionally, component of the F(0) channel, it forms part of the peripheral stalk, linking F(1) to F(0). The protein is ATP synthase subunit b of Corynebacterium jeikeium (strain K411).